The following is a 160-amino-acid chain: Eosinophil cationic protein (160 aa).

Positions Met-1–Ala-27 are cleaved as a signal peptide. A required for nearly all of the bactericidal activities; partially involved in LPS-binding region spans residues Lys-28–Arg-72. His-42 (proton acceptor) is an active-site residue. 4 cysteine pairs are disulfide-bonded: Cys-50/Cys-110, Cys-64/Cys-123, Cys-82/Cys-138, and Cys-89/Cys-98. At Tyr-60 the chain carries 3'-nitrotyrosine. Lys-65–Thr-69 contributes to the substrate binding site. 4 N-linked (GlcNAc...) asparagine glycosylation sites follow: Asn-86, Asn-92, Asn-111, and Asn-119. Residue His-155 is the Proton donor of the active site.

Belongs to the pancreatic ribonuclease family. As to quaternary structure, interacts with bacterial lipopolysaccharide (LPS) and lipoteichoic acid (LTA). In vitro interacts with phospholipid bilayers.

Its subcellular location is the secreted. Cytotoxin and helminthotoxin with low-efficiency ribonuclease activity. Possesses a wide variety of biological activities. Exhibits antibacterial activity. The sequence is that of Eosinophil cationic protein (RNASE3) from Pongo pygmaeus (Bornean orangutan).